We begin with the raw amino-acid sequence, 702 residues long: Lipase maturation factor 2 (702 aa).

Transmembrane regions (helical) follow at residues leucine 10–isoleucine 30, alanine 75–leucine 95, phenylalanine 102–leucine 122, tyrosine 123–leucine 143, aspartate 164–valine 184, leucine 226–isoleucine 246, leucine 259–valine 279, leucine 316–leucine 336, valine 363–leucine 383, and phenylalanine 396–serine 416. A glycan (N-linked (GlcNAc...) asparagine) is linked at asparagine 488. Residues glutamine 628–isoleucine 648 traverse the membrane as a helical segment. The segment at leucine 660 to lysine 702 is disordered. The span at glutamine 665 to alanine 681 shows a compositional bias: basic and acidic residues. A compositionally biased stretch (polar residues) spans valine 682–serine 695.

The protein belongs to the lipase maturation factor family.

It is found in the endoplasmic reticulum membrane. In terms of biological role, involved in the maturation of specific proteins in the endoplasmic reticulum. May be required for maturation and transport of active lipoprotein lipase (LPL) through the secretory pathway. This Rattus norvegicus (Rat) protein is Lipase maturation factor 2 (Lmf2).